We begin with the raw amino-acid sequence, 515 residues long: Histidine ammonia-lyase (515 aa).

The segment at residues 145–147 (ASG) is a cross-link (5-imidazolinone (Ala-Gly)). Ser146 carries the 2,3-didehydroalanine (Ser) modification.

The protein belongs to the PAL/histidase family. Contains an active site 4-methylidene-imidazol-5-one (MIO), which is formed autocatalytically by cyclization and dehydration of residues Ala-Ser-Gly.

The protein localises to the cytoplasm. The catalysed reaction is L-histidine = trans-urocanate + NH4(+). It participates in amino-acid degradation; L-histidine degradation into L-glutamate; N-formimidoyl-L-glutamate from L-histidine: step 1/3. This Gluconobacter oxydans (strain 621H) (Gluconobacter suboxydans) protein is Histidine ammonia-lyase.